We begin with the raw amino-acid sequence, 550 residues long: Crystal protein (550 aa).

An N-terminal signal peptide occupies residues 1–19 (MNKIIILLIILLSFDIISA). C91 and C111 are oxidised to a cystine. N156 carries an N-linked (GlcNAc...) asparagine glycan. Residue S215 is the Acyl-ester intermediate of the active site. A disulfide bridge connects residues C267 and C274. Active-site charge relay system residues include E340 and H443. N506 carries N-linked (GlcNAc...) asparagine glycosylation.

Belongs to the type-B carboxylesterase/lipase family.

The protein resides in the cytoplasmic vesicle. The protein localises to the esterosome membrane. The polypeptide is Crystal protein (cryS) (Dictyostelium discoideum (Social amoeba)).